A 243-amino-acid chain; its full sequence is Glutathione S-transferase U14 (243 aa).

The GST N-terminal domain maps to 5 to 87; it reads DTVKLIGCSD…YLDEAWPSDP (83 aa). Glutathione-binding positions include 15–16, 44–45, 58–59, and 71–72; these read DP, EK, KT, and ES. Residues 93 to 220 enclose the GST C-terminal domain; that stretch reads NAYDRASARF…MPTVEEVTEL (128 aa). Position 159 is a phosphothreonine (threonine 159).

This sequence belongs to the GST superfamily. Tau family.

It is found in the cytoplasm. Its subcellular location is the cytosol. The catalysed reaction is RX + glutathione = an S-substituted glutathione + a halide anion + H(+). May be involved in the conjugation of reduced glutathione to a wide number of exogenous and endogenous hydrophobic electrophiles and have a detoxification role against certain herbicides. In Arabidopsis thaliana (Mouse-ear cress), this protein is Glutathione S-transferase U14 (GSTU14).